We begin with the raw amino-acid sequence, 196 residues long: Pentatricopeptide repeat-containing protein At1g62350 (196 aa).

PPR repeat units follow at residues 70–104 and 105–139; these read DMFF…EVLF and DQHT…PDRP.

Belongs to the PPR family. P subfamily.

In Arabidopsis thaliana (Mouse-ear cress), this protein is Pentatricopeptide repeat-containing protein At1g62350.